The chain runs to 483 residues: ATP synthase subunit beta (483 aa).

162–169 (GGAGVGKT) is an ATP binding site.

This sequence belongs to the ATPase alpha/beta chains family. In terms of assembly, F-type ATPases have 2 components, CF(1) - the catalytic core - and CF(0) - the membrane proton channel. CF(1) has five subunits: alpha(3), beta(3), gamma(1), delta(1), epsilon(1). CF(0) has four main subunits: a(1), b(1), b'(1) and c(9-12).

The protein resides in the cellular thylakoid membrane. It catalyses the reaction ATP + H2O + 4 H(+)(in) = ADP + phosphate + 5 H(+)(out). Its function is as follows. Produces ATP from ADP in the presence of a proton gradient across the membrane. The catalytic sites are hosted primarily by the beta subunits. In Rippkaea orientalis (strain PCC 8801 / RF-1) (Cyanothece sp. (strain PCC 8801)), this protein is ATP synthase subunit beta.